A 65-amino-acid polypeptide reads, in one-letter code: Small ribosomal subunit protein bS21 (65 aa).

The protein belongs to the bacterial ribosomal protein bS21 family.

This chain is Small ribosomal subunit protein bS21, found in Thermodesulfovibrio yellowstonii (strain ATCC 51303 / DSM 11347 / YP87).